We begin with the raw amino-acid sequence, 371 residues long: Aspartate-semialdehyde dehydrogenase (371 aa).

NADP(+) is bound by residues 10–13, 37–38, and Gln74; these read RGMV and TS. Arg103 provides a ligand contact to phosphate. Catalysis depends on Cys136, which acts as the Acyl-thioester intermediate. Substrate is bound at residue Gln163. Ser166 is a binding site for NADP(+). Residue Glu243 participates in substrate binding. Lys246 contributes to the phosphate binding site. A substrate-binding site is contributed by Arg270. His277 functions as the Proton acceptor in the catalytic mechanism. Gln353 contacts NADP(+).

It belongs to the aspartate-semialdehyde dehydrogenase family. Homodimer.

The catalysed reaction is L-aspartate 4-semialdehyde + phosphate + NADP(+) = 4-phospho-L-aspartate + NADPH + H(+). The protein operates within amino-acid biosynthesis; L-lysine biosynthesis via DAP pathway; (S)-tetrahydrodipicolinate from L-aspartate: step 2/4. It participates in amino-acid biosynthesis; L-methionine biosynthesis via de novo pathway; L-homoserine from L-aspartate: step 2/3. Its pathway is amino-acid biosynthesis; L-threonine biosynthesis; L-threonine from L-aspartate: step 2/5. In terms of biological role, catalyzes the NADPH-dependent formation of L-aspartate-semialdehyde (L-ASA) by the reductive dephosphorylation of L-aspartyl-4-phosphate. The sequence is that of Aspartate-semialdehyde dehydrogenase from Haemophilus influenzae (strain ATCC 51907 / DSM 11121 / KW20 / Rd).